We begin with the raw amino-acid sequence, 230 residues long: MTNAALDDKTIVRDYFNSTGFDRWRRIYGDGQVNFVQKDIRVGHQQTVDSVVAWLVADGNLPGLLVCDAGCGVGSLSIPLAQAGALVYGSDISEKMVGEAQQKAQEVLAYGNQPTFMTQDLAQLGGKYDTVICLDVLIHYPTEEASAMISHLASLADRRLILSFAPKTLGLTVLKKIGGLFPGPSKTTRAYQHKEADIRKILGDNGFSIARTGMTSTRFYYSRILEAVRS.

Belongs to the class I-like SAM-binding methyltransferase superfamily. Magnesium protoporphyrin O-methyltransferase family.

It carries out the reaction Mg-protoporphyrin IX + S-adenosyl-L-methionine = Mg-protoporphyrin IX 13-monomethyl ester + S-adenosyl-L-homocysteine. Its pathway is porphyrin-containing compound metabolism; chlorophyll biosynthesis (light-independent). Functionally, converts Mg-protoporphyrin IX to Mg-protoporphyrin IX methylester using S-adenosyl-L-methionine as a cofactor. The chain is Magnesium-protoporphyrin O-methyltransferase (chlM) from Synechocystis sp. (strain ATCC 27184 / PCC 6803 / Kazusa).